The sequence spans 1368 residues: DNA-directed RNA polymerase subunit beta (1368 aa).

The protein belongs to the RNA polymerase beta chain family. In terms of assembly, the RNAP catalytic core consists of 2 alpha, 1 beta, 1 beta' and 1 omega subunit. When a sigma factor is associated with the core the holoenzyme is formed, which can initiate transcription.

The catalysed reaction is RNA(n) + a ribonucleoside 5'-triphosphate = RNA(n+1) + diphosphate. Its function is as follows. DNA-dependent RNA polymerase catalyzes the transcription of DNA into RNA using the four ribonucleoside triphosphates as substrates. The sequence is that of DNA-directed RNA polymerase subunit beta from Legionella pneumophila (strain Paris).